The primary structure comprises 209 residues: Imidazole glycerol phosphate synthase subunit HisH (209 aa).

In terms of domain architecture, Glutamine amidotransferase type-1 spans 1 to 205 (MIAIIDYGMG…QGVVEAWKSS (205 aa)). C79 serves as the catalytic Nucleophile. Catalysis depends on residues H180 and E182.

Heterodimer of HisH and HisF.

Its subcellular location is the cytoplasm. The catalysed reaction is 5-[(5-phospho-1-deoxy-D-ribulos-1-ylimino)methylamino]-1-(5-phospho-beta-D-ribosyl)imidazole-4-carboxamide + L-glutamine = D-erythro-1-(imidazol-4-yl)glycerol 3-phosphate + 5-amino-1-(5-phospho-beta-D-ribosyl)imidazole-4-carboxamide + L-glutamate + H(+). The enzyme catalyses L-glutamine + H2O = L-glutamate + NH4(+). The protein operates within amino-acid biosynthesis; L-histidine biosynthesis; L-histidine from 5-phospho-alpha-D-ribose 1-diphosphate: step 5/9. Its function is as follows. IGPS catalyzes the conversion of PRFAR and glutamine to IGP, AICAR and glutamate. The HisH subunit catalyzes the hydrolysis of glutamine to glutamate and ammonia as part of the synthesis of IGP and AICAR. The resulting ammonia molecule is channeled to the active site of HisF. The sequence is that of Imidazole glycerol phosphate synthase subunit HisH from Bacillus cereus (strain ATCC 14579 / DSM 31 / CCUG 7414 / JCM 2152 / NBRC 15305 / NCIMB 9373 / NCTC 2599 / NRRL B-3711).